Here is a 307-residue protein sequence, read N- to C-terminus: Pantothenate kinase (307 aa).

90 to 97 (GSVAVGKS) contributes to the ATP binding site.

Belongs to the prokaryotic pantothenate kinase family.

It is found in the cytoplasm. The catalysed reaction is (R)-pantothenate + ATP = (R)-4'-phosphopantothenate + ADP + H(+). Its pathway is cofactor biosynthesis; coenzyme A biosynthesis; CoA from (R)-pantothenate: step 1/5. The protein is Pantothenate kinase of Enterococcus faecalis (strain ATCC 700802 / V583).